A 161-amino-acid polypeptide reads, in one-letter code: Large ribosomal subunit protein uL30m (161 aa).

Residues 1–34 (MAGILRSIVQRPPGRLQTATKGVEPLVCVDWIRH) constitute a mitochondrion transit peptide.

Belongs to the universal ribosomal protein uL30 family. In terms of assembly, component of the mitochondrial ribosome large subunit (39S) which comprises a 16S rRNA and about 50 distinct proteins.

The protein localises to the mitochondrion. In Bos taurus (Bovine), this protein is Large ribosomal subunit protein uL30m (MRPL30).